The chain runs to 308 residues: MNKDNTLHTIMKITMFSEVSVGISANSILFFAHLCMLLGENRPKPFHLYIVSLSLTQLILLITMGLIAVDMFMSWGRWDSTPCQSLIYLHRLLRGFTLCAACLLNVFWMITLSPRSSCLSKFKHNSPHHISGAFLFLCVLYMSFSSHLLVSIIATPNLTSNIFMYVTQSCSLLPMSYSRTSTFSTTIAIREAFLISLMALSSGFMVTLLWRHKKQAQHLHSTSLSSKASPERRATRTILLLMSFFVVLYILENVVFYSRMKFKDGSMFYCVQIIVSHSYATISPFVFICTEKHMTKILRSVCTRIINI.

The Extracellular portion of the chain corresponds to 1-18 (MNKDNTLHTIMKITMFSE). A helical membrane pass occupies residues 19-39 (VSVGISANSILFFAHLCMLLG). At 40–48 (ENRPKPFHL) the chain is on the cytoplasmic side. The helical transmembrane segment at 49-69 (YIVSLSLTQLILLITMGLIAV) threads the bilayer. Topologically, residues 70–91 (DMFMSWGRWDSTPCQSLIYLHR) are extracellular. A disulfide bridge connects residues C83 and C170. The helical transmembrane segment at 92 to 112 (LLRGFTLCAACLLNVFWMITL) threads the bilayer. Over 113–132 (SPRSSCLSKFKHNSPHHISG) the chain is Cytoplasmic. The helical transmembrane segment at 133–153 (AFLFLCVLYMSFSSHLLVSII) threads the bilayer. Over 154-188 (ATPNLTSNIFMYVTQSCSLLPMSYSRTSTFSTTIA) the chain is Extracellular. An N-linked (GlcNAc...) asparagine glycan is attached at N157. The helical transmembrane segment at 189–209 (IREAFLISLMALSSGFMVTLL) threads the bilayer. Over 210–236 (WRHKKQAQHLHSTSLSSKASPERRATR) the chain is Cytoplasmic. The helical transmembrane segment at 237 to 257 (TILLLMSFFVVLYILENVVFY) threads the bilayer. Residues 258–267 (SRMKFKDGSM) are Extracellular-facing. The helical transmembrane segment at 268–288 (FYCVQIIVSHSYATISPFVFI) threads the bilayer. The Cytoplasmic segment spans residues 289–308 (CTEKHMTKILRSVCTRIINI).

Belongs to the G-protein coupled receptor 1 family.

It localises to the cell membrane. Its function is as follows. Putative pheromone receptor implicated in the regulation of social as well as reproductive behavior. In Rattus norvegicus (Rat), this protein is Vomeronasal type-1 receptor 92 (Vom1r92).